The following is a 147-amino-acid chain: Phosphoribosyl-AMP cyclohydrolase (147 aa).

Residue D91 coordinates Mg(2+). C92 contacts Zn(2+). Residues D93 and D95 each contribute to the Mg(2+) site. 2 residues coordinate Zn(2+): C108 and C115.

The protein belongs to the PRA-CH family. As to quaternary structure, homodimer. Requires Mg(2+) as cofactor. It depends on Zn(2+) as a cofactor.

The protein localises to the cytoplasm. The catalysed reaction is 1-(5-phospho-beta-D-ribosyl)-5'-AMP + H2O = 1-(5-phospho-beta-D-ribosyl)-5-[(5-phospho-beta-D-ribosylamino)methylideneamino]imidazole-4-carboxamide. Its pathway is amino-acid biosynthesis; L-histidine biosynthesis; L-histidine from 5-phospho-alpha-D-ribose 1-diphosphate: step 3/9. Its function is as follows. Catalyzes the hydrolysis of the adenine ring of phosphoribosyl-AMP. The sequence is that of Phosphoribosyl-AMP cyclohydrolase from Rhodopseudomonas palustris (strain BisB5).